The primary structure comprises 102 residues: Thioredoxin (102 aa).

Positions 2–102 (VTEIRSLKQL…KTKIIDLFNN (101 aa)) constitute a Thioredoxin domain. Cysteine 30 and cysteine 33 are oxidised to a cystine.

This sequence belongs to the thioredoxin family.

Participates in various redox reactions through the reversible oxidation of its active center dithiol to a disulfide and catalyzes dithiol-disulfide exchange reactions. The protein is Thioredoxin (trxA) of Mycoplasma genitalium (strain ATCC 33530 / DSM 19775 / NCTC 10195 / G37) (Mycoplasmoides genitalium).